The following is a 142-amino-acid chain: Cytochrome c-type biogenesis protein CcmE (142 aa).

The Cytoplasmic segment spans residues 1 to 2 (MK). Residues 3–23 (GKYLLGILVILGALGYMVFGG) form a helical; Signal-anchor for type II membrane protein membrane-spanning segment. At 24 to 142 (LGRNLVYFLT…EVRKLIEEAQ (119 aa)) the chain is on the periplasmic side. Heme-binding residues include H118 and Y122.

It belongs to the CcmE/CycJ family.

The protein localises to the cell inner membrane. Functionally, heme chaperone required for the biogenesis of c-type cytochromes. Transiently binds heme delivered by CcmC and transfers the heme to apo-cytochromes in a process facilitated by CcmF and CcmH. This is Cytochrome c-type biogenesis protein CcmE from Thermus thermophilus (strain ATCC BAA-163 / DSM 7039 / HB27).